We begin with the raw amino-acid sequence, 157 residues long: RNA pyrophosphohydrolase (157 aa).

Residues 6–149 form the Nudix hydrolase domain; sequence SYRPNVAAVI…KRKVYRRVID (144 aa). The Nudix box signature appears at 43–64; sequence GGIDEGETPEDALYRELLEEIG.

It belongs to the Nudix hydrolase family. RppH subfamily. A divalent metal cation is required as a cofactor.

Functionally, accelerates the degradation of transcripts by removing pyrophosphate from the 5'-end of triphosphorylated RNA, leading to a more labile monophosphorylated state that can stimulate subsequent ribonuclease cleavage. This Sulfurovum sp. (strain NBC37-1) protein is RNA pyrophosphohydrolase.